A 179-amino-acid chain; its full sequence is uncharacterized protein (179 aa).

This sequence belongs to the CAPAB/TerDEXZ family.

This is an uncharacterized protein from Synechocystis sp. (strain ATCC 27184 / PCC 6803 / Kazusa).